A 191-amino-acid polypeptide reads, in one-letter code: Sec-independent protein translocase protein TatB (191 aa).

The chain crosses the membrane as a helical span at residues 1 to 21 (MFDIGFSELFLILVIGLLVLG). Positions 119 to 138 (ESTSQTLTEQLTPSEQVTEA) are enriched in polar residues. Disordered stretches follow at residues 119 to 139 (ESTS…TEAT) and 168 to 191 (DDDD…DKKA). Over residues 181–191 (PQTEEIQDKKA) the composition is skewed to basic and acidic residues.

This sequence belongs to the TatB family. In terms of assembly, the Tat system comprises two distinct complexes: a TatABC complex, containing multiple copies of TatA, TatB and TatC subunits, and a separate TatA complex, containing only TatA subunits. Substrates initially bind to the TatABC complex, which probably triggers association of the separate TatA complex to form the active translocon.

It is found in the cell inner membrane. Functionally, part of the twin-arginine translocation (Tat) system that transports large folded proteins containing a characteristic twin-arginine motif in their signal peptide across membranes. Together with TatC, TatB is part of a receptor directly interacting with Tat signal peptides. TatB may form an oligomeric binding site that transiently accommodates folded Tat precursor proteins before their translocation. This Pasteurella multocida (strain Pm70) protein is Sec-independent protein translocase protein TatB.